A 207-amino-acid polypeptide reads, in one-letter code: MSQQMHNPSIRRKLVIVGDGACGKTCLLIVFAKGKFPQVYVPTVFDNYVADVEVDGRRVELALWDTAGQEDYDRLRPLSYPDSNVVLICYSIDLPDSLENVMEKWISEVLYFCQGVPIILVGCKADLRNDPQVIEQLRQQGQQPVSQAQAQEVADQIGAVEYIECSAKTGFGVREVFEAATRASLMGKQGKSKAKSDKKKKKKCVVL.

GTP is bound at residue 18–25 (GDGACGKT). The short motif at 40–48 (YVPTVFDNY) is the Effector region element. Residues 65–69 (DTAGQ) and 123–126 (CKAD) contribute to the GTP site. The segment at 187-207 (GKQGKSKAKSDKKKKKKCVVL) is disordered. A compositionally biased stretch (basic residues) spans 190–207 (GKSKAKSDKKKKKKCVVL). The residue at position 204 (Cys204) is a Cysteine methyl ester. Cys204 carries the S-geranylgeranyl cysteine lipid modification. Residues 205 to 207 (VVL) constitute a propeptide, removed in mature form.

The protein belongs to the small GTPase superfamily. Rho family.

Its subcellular location is the cell membrane. Functionally, involved in the regulation of actin polarization. Rho proteins are required for distinct steps during polarized hyphal growth of A.gossypii. This is GTP-binding protein RHO1 (RHO1) from Eremothecium gossypii (strain ATCC 10895 / CBS 109.51 / FGSC 9923 / NRRL Y-1056) (Yeast).